Consider the following 78-residue polypeptide: Putative defensin-like protein 202 (78 aa).

Residues M1–G29 form the signal peptide. 3 disulfide bridges follow: C44/C65, C49/C74, and C53/C76.

The protein belongs to the DEFL family.

It is found in the secreted. This is Putative defensin-like protein 202 from Arabidopsis thaliana (Mouse-ear cress).